The sequence spans 298 residues: MSYKSGFVSVIGRPNVGKSTLLNTITGQKIAIMSNKPQTTRNTIRGVITNKECQLILIDTPGIHKPKTKLGEYMVNVASETIKEVDLILFLVEANTQPGAQDVNIIQQLKQIKTPVFLILNKVDLISKDKLLAIIDSYSKLMDFKAIIPISALKNDGIDLILKEALDYIPEGPQFFSEDMLTDQPEKVIAAEMIREKVLLNLDDEVPHGVGVEVTSFKEREDGLINIQATIYCEKSSHKGIIIGKQGNMLKKIGSAARYEIERLLDTKIFLELWVKVKPDWRNSDNMLKTLGYKTNKN.

The region spanning Lys-4–Glu-171 is the Era-type G domain. Positions Gly-12–Ser-19 are G1. Gly-12–Ser-19 provides a ligand contact to GTP. The G2 stretch occupies residues Gln-38 to Asn-42. The interval Asp-59–Gly-62 is G3. Residues Asp-59 to Ile-63 and Asn-121 to Asp-124 contribute to the GTP site. The segment at Asn-121 to Asp-124 is G4. The tract at residues Ile-150 to Ala-152 is G5. The KH type-2 domain maps to Leu-202–Pro-279.

The protein belongs to the TRAFAC class TrmE-Era-EngA-EngB-Septin-like GTPase superfamily. Era GTPase family. Monomer.

The protein resides in the cytoplasm. Its subcellular location is the cell membrane. An essential GTPase that binds both GDP and GTP, with rapid nucleotide exchange. Plays a role in 16S rRNA processing and 30S ribosomal subunit biogenesis and possibly also in cell cycle regulation and energy metabolism. The chain is GTPase Era from Ruminiclostridium cellulolyticum (strain ATCC 35319 / DSM 5812 / JCM 6584 / H10) (Clostridium cellulolyticum).